The sequence spans 298 residues: Methylsterol monooxygenase 1-1 (298 aa).

Transmembrane regions (helical) follow at residues 42-62, 96-116, and 118-138; these read ILFL…VELA, FILV…MIEI, and SGLP…YFLI. Residues 132 to 267 enclose the Fatty acid hydroxylase domain; that stretch reads LVVYFLIEDY…FTYCDYIYGT (136 aa). Residues 147–151 carry the Histidine box-1 motif; that stretch reads HRFFH. The Histidine box-2 signature appears at 160-164; it reads HRVHH. A helical membrane pass occupies residues 189–209; sequence TFMGPAIAPGHMITFWLWIAL. Positions 239–245 match the Histidine box-3 motif; sequence YHDYHHY.

This sequence belongs to the sterol desaturase family. Interacts with ACBP1. Fe cation serves as cofactor. Expressed in rosettes, stems, roots, floral buds, flowers and siliques.

It is found in the endoplasmic reticulum membrane. It carries out the reaction 4,4-dimethyl-5alpha-cholest-7-en-3beta-ol + 6 Fe(II)-[cytochrome b5] + 3 O2 + 5 H(+) = 4alpha-carboxy-4beta-methyl-5alpha-cholest-7-ene-3beta-ol + 6 Fe(III)-[cytochrome b5] + 4 H2O. The catalysed reaction is 24-methylenecycloartanol + 6 Fe(II)-[cytochrome b5] + 3 O2 + 5 H(+) = 4alpha-carboxy-4beta,14alpha-dimethyl-9beta,19-cyclo-5alpha-ergost-24(24(1))-en-3beta-ol + 6 Fe(III)-[cytochrome b5] + 4 H2O. In terms of biological role, non-heme iron oxygenase involved in sterols biosynthesis by catalyzing the removal of the first methyl group at the C-4 position. 4,4-dimethyl-9-beta,19-cyclopropylsterols such as 24-methylenecycloartanol are the preferred substrates. Acts as a rate-limiting enzyme in the sterol pathway via interaction with ACBP1; sterols serve as lipid modulators for gene expression of homeodomain-leucine zipper IV transcription factors. Together with SMO1-2, involved in the maintenance of sterol composition to balance auxin and cytokinin activities during embryogenesis. This Arabidopsis thaliana (Mouse-ear cress) protein is Methylsterol monooxygenase 1-1.